Here is a 1148-residue protein sequence, read N- to C-terminus: Phospholipid-transporting ATPase IB (1148 aa).

Over 1-54 (MSRATSVGDQLDVPARTIYLNQPHLNKFCDNQISTAKYSVVTFLPRFLYEQIRR) the chain is Cytoplasmic. Thr-5 carries the phosphothreonine modification. Residues 55 to 75 (AANAFFLFIALLQQIPDVSPT) traverse the membrane as a helical segment. Residues 76–79 (GRYT) lie on the Exoplasmic loop side of the membrane. The helical transmembrane segment at 80–100 (TLVPLIIILTIAGIKEIVEDF) threads the bilayer. The Cytoplasmic segment spans residues 101 to 276 (KRHKADNAVN…SNVEKVTNVQ (176 aa)). A helical transmembrane segment spans residues 277-297 (ILVLFGILLVMALVSSVGALY). Residues 298-324 (WNGSQGGKNWYIKKMDATSDNFGYNLL) are Exoplasmic loop-facing. A helical membrane pass occupies residues 325 to 345 (TFIILYNNLIPISLLVTLEVV). The Cytoplasmic segment spans residues 346-847 (KYTQALFINW…CILYCFYKNV (502 aa)). Asp-388 functions as the 4-aspartylphosphate intermediate in the catalytic mechanism. Asp-388, Lys-389, Thr-390, Glu-488, Phe-529, Lys-552, Arg-585, Thr-665, Gly-666, Asp-667, Arg-755, and Lys-761 together coordinate ATP. Asp-388 contacts Mg(2+). Thr-390 is a Mg(2+) binding site. Asp-781 contacts Mg(2+). Asn-784 and Asp-785 together coordinate ATP. Residue Asp-785 participates in Mg(2+) binding. A helical membrane pass occupies residues 848-868 (VLYIIELWFAFVNGFSGQILF). The Exoplasmic loop segment spans residues 869-870 (ER). Residues 871–891 (WCIGLYNVIFTALPPFTLGIF) traverse the membrane as a helical segment. Over 892–919 (ERSCSQESMLRFPQLYKITQNAEGFNTK) the chain is Cytoplasmic. Residues 920 to 940 (VFWGHCINALVHSLILFWFPM) form a helical membrane-spanning segment. Topologically, residues 941 to 957 (KALEHDTVLANGHATDY) are exoplasmic loop. A helical transmembrane segment spans residues 958 to 978 (LFVGNIVYTYVVVTVCLKAGL). Residues 979–988 (ETTAWTKFSH) are Cytoplasmic-facing. A helical transmembrane segment spans residues 989 to 1009 (LAVWGSMLIWLVFFGIYSTIW). Residues 1010–1023 (PTIPIAPDMKGQAT) lie on the Exoplasmic loop side of the membrane. The chain crosses the membrane as a helical span at residues 1024–1044 (MVLSSAHFWLGLFLVPTACLI). Over 1045–1148 (EDVAWRAAKH…DTTKQKSRKK (104 aa)) the chain is Cytoplasmic. Positions 1102-1126 (PPTLFRGSSLQQSMPHGYAFSQEEH) are disordered.

It belongs to the cation transport ATPase (P-type) (TC 3.A.3) family. Type IV subfamily. In terms of assembly, component of a P4-ATPase flippase complex which consists of a catalytic alpha subunit and an accessory beta subunit. Interacts with TMEM30A to form a flippase complex. Requires Mg(2+) as cofactor. Expressed in retinal photoreceptor cells and testis.

The protein resides in the membrane. Its subcellular location is the golgi apparatus membrane. It is found in the endosome membrane. It localises to the cell membrane. The protein localises to the photoreceptor outer segment membrane. The protein resides in the photoreceptor inner segment membrane. The catalysed reaction is ATP + H2O + phospholipidSide 1 = ADP + phosphate + phospholipidSide 2.. It carries out the reaction a 1,2-diacyl-sn-glycero-3-phospho-L-serine(out) + ATP + H2O = a 1,2-diacyl-sn-glycero-3-phospho-L-serine(in) + ADP + phosphate + H(+). It catalyses the reaction a 1,2-diacyl-sn-glycero-3-phosphoethanolamine(in) + ATP + H2O = a 1,2-diacyl-sn-glycero-3-phosphoethanolamine(out) + ADP + phosphate + H(+). With respect to regulation, ATPase activity is stimulated by phosphatidylserine (PS) and minimally by phosphatidylethanolamine (PE). ATPase activity is inhibited by N-ethylmaleimide (NEM) and vanadate. Flippase activity is inhibited by NEM and 1,2-dioleoyl-sn-glycero-3-phospho-L-serine (DOPS). Its function is as follows. Catalytic component of a P4-ATPase flippase complex which catalyzes the hydrolysis of ATP coupled to the transport of aminophospholipids from the outer to the inner leaflet of various membranes and ensures the maintenance of asymmetric distribution of phospholipids. Able to translocate phosphatidylserine, but not phosphatidylcholine. Phospholipid translocation seems also to be implicated in vesicle formation and in uptake of lipid signaling molecules. Reconstituted to liposomes, the ATP8A2:TMEM30A flippase complex predominantly transports phosphatidylserine (PS) and to a lesser extent phosphatidylethanolamine (PE). Phospholipid translocation is not associated with a countertransport of an inorganic ion or other charged substrate from the cytoplasmic side toward the exoplasm in connection with the phosphorylation from ATP. ATP8A2:TMEM30A may be involved in regulation of neurite outgrowth. Proposed to function in the generation and maintenance of phospholipid asymmetry in photoreceptor disk membranes and neuronal axon membranes. May be involved in vesicle trafficking in neuronal cells. Required for normal visual and auditory function; involved in photoreceptor and inner ear spiral ganglion cell survival. This Bos taurus (Bovine) protein is Phospholipid-transporting ATPase IB.